A 77-amino-acid chain; its full sequence is MKLMIFAGLVLFAIVSLIEAQAEHEKPCLPEYKVCTHAPGNCCSDLVYDCYGRYKSGAQIGRNCFCLQKGVIYKREN.

The signal sequence occupies residues 1–20 (MKLMIFAGLVLFAIVSLIEA). Residues 21-26 (QAEHEK) constitute a propeptide that is removed on maturation.

It belongs to the neurotoxin 19 (CSTX) family. 08 (U8-Lctx) subfamily. Post-translationally, contains 4 disulfide bonds. Expressed by the venom gland.

The protein resides in the secreted. This chain is U8-lycotoxin-Ls1q, found in Lycosa singoriensis (Wolf spider).